We begin with the raw amino-acid sequence, 104 residues long: Large ribosomal subunit protein uL24 (104 aa).

It belongs to the universal ribosomal protein uL24 family. As to quaternary structure, part of the 50S ribosomal subunit.

Its function is as follows. One of two assembly initiator proteins, it binds directly to the 5'-end of the 23S rRNA, where it nucleates assembly of the 50S subunit. Functionally, one of the proteins that surrounds the polypeptide exit tunnel on the outside of the subunit. This is Large ribosomal subunit protein uL24 from Bartonella henselae (strain ATCC 49882 / DSM 28221 / CCUG 30454 / Houston 1) (Rochalimaea henselae).